Reading from the N-terminus, the 207-residue chain is Abscisic acid receptor PYL9 (207 aa).

The segment at 31–197 is START-like; it reads FPPSTTTATT…NLQMLAAVAE (167 aa). Abscisate-binding positions include Lys-74, 104–109, 131–137, and Glu-162; these read ASTSTE and RLRNYRS. The Gate loop signature appears at 100-104; the sequence is SGLPA. The short motif at 130–132 is the Latch loop element; it reads HRL.

This sequence belongs to the PYR/PYL/RCAR abscisic acid intracellular receptor family. Homodimer. Interacts with PP2C06. Interacts with PP2C50. Binding to PP2C50 is dependent on the presence of abscisic acid (ABA). Interacts with PP2C30 and PP2C53. Binding to PP2C30 and PP2C53 is dependent on the presence of ABA.

The protein resides in the cytoplasm. It is found in the cytosol. The protein localises to the nucleus. Functionally, involved in abscisic acid (ABA) signaling during seed germination and abiotic stress response. Acts as a positive regulator of ABA-mediated inhibition of seed germination, and tolerance to drought and cold stresses. Inhibits the activity of the protein phosphatases PP2C06 and PP2C09 when activated by abscisic acid (ABA). The sequence is that of Abscisic acid receptor PYL9 from Oryza sativa subsp. japonica (Rice).